The sequence spans 170 residues: Ankyrin repeat-containing protein C105.02c (170 aa).

2 ANK repeats span residues Leu46–Asn76 and Thr81–Leu116. Positions Ser150 to Glu170 are disordered. The segment covering Val154–Glu170 has biased composition (acidic residues).

The protein localises to the cytoplasm. Its subcellular location is the nucleus. This chain is Ankyrin repeat-containing protein C105.02c, found in Schizosaccharomyces pombe (strain 972 / ATCC 24843) (Fission yeast).